Reading from the N-terminus, the 452-residue chain is Phosphoglucosamine mutase (452 aa).

Serine 105 functions as the Phosphoserine intermediate in the catalytic mechanism. 4 residues coordinate Mg(2+): serine 105, aspartate 244, aspartate 246, and aspartate 248. The residue at position 105 (serine 105) is a Phosphoserine.

The protein belongs to the phosphohexose mutase family. Mg(2+) serves as cofactor. Post-translationally, activated by phosphorylation.

It carries out the reaction alpha-D-glucosamine 1-phosphate = D-glucosamine 6-phosphate. Its function is as follows. Catalyzes the conversion of glucosamine-6-phosphate to glucosamine-1-phosphate. This Blochmanniella floridana protein is Phosphoglucosamine mutase.